Reading from the N-terminus, the 141-residue chain is Hemoglobin subunit alpha-1/2 (141 aa).

Residues 1-141 (VLSPADKANV…VGTVLTSKYR (141 aa)) form the Globin domain. Residue S3 is modified to Phosphoserine. N6-succinyllysine is present on residues K7 and K11. Position 16 is an N6-acetyllysine; alternate (K16). Residue K16 is modified to N6-succinyllysine; alternate. Position 24 is a phosphotyrosine (Y24). Position 35 is a phosphoserine (S35). K40 is subject to N6-succinyllysine. Position 49 is a phosphoserine (S49). H58 lines the O2 pocket. Residue H87 participates in heme b binding. Phosphoserine is present on S102. Phosphothreonine is present on T108. Phosphoserine occurs at positions 124 and 131. Phosphothreonine occurs at positions 134 and 137. S138 bears the Phosphoserine mark.

This sequence belongs to the globin family. In terms of assembly, heterotetramer of two alpha chains and two beta chains. As to expression, red blood cells.

Its function is as follows. Involved in oxygen transport from the lung to the various peripheral tissues. The polypeptide is Hemoglobin subunit alpha-1/2 (Macroderma gigas (Australian ghost bat)).